Here is a 390-residue protein sequence, read N- to C-terminus: Chorismate synthase 1 (390 aa).

NADP(+) is bound by residues Arg-39 and Arg-45. The tract at residues 95–117 (EQEEKEMKRKVTKPRPGHADLNG) is disordered. FMN-binding positions include 132 to 134 (RSS), 253 to 254 (NA), Gly-298, 313 to 317 (KPIPT), and Arg-339.

Belongs to the chorismate synthase family. Homotetramer. The cofactor is FMNH2.

The enzyme catalyses 5-O-(1-carboxyvinyl)-3-phosphoshikimate = chorismate + phosphate. It functions in the pathway metabolic intermediate biosynthesis; chorismate biosynthesis; chorismate from D-erythrose 4-phosphate and phosphoenolpyruvate: step 7/7. In terms of biological role, catalyzes the anti-1,4-elimination of the C-3 phosphate and the C-6 proR hydrogen from 5-enolpyruvylshikimate-3-phosphate (EPSP) to yield chorismate, which is the branch point compound that serves as the starting substrate for the three terminal pathways of aromatic amino acid biosynthesis. This reaction introduces a second double bond into the aromatic ring system. The polypeptide is Chorismate synthase 1 (Bacillus thuringiensis (strain Al Hakam)).